Here is a 526-residue protein sequence, read N- to C-terminus: Meiotically up-regulated gene 99 protein, mitochondrial (526 aa).

Transmembrane regions (helical) follow at residues 398–418 and 421–441; these read TLYT…LYFV and FSLY…LYYL.

It is found in the mitochondrion membrane. In terms of biological role, required for correct meiotic chromosome segregation. Appears to also have role in sporulation. The chain is Meiotically up-regulated gene 99 protein, mitochondrial (mug99) from Schizosaccharomyces pombe (strain 972 / ATCC 24843) (Fission yeast).